The primary structure comprises 220 residues: Guanylate kinase (220 aa).

Residues 15-194 (GLMLVISSPS…AFEGIEAIVK (180 aa)) enclose the Guanylate kinase-like domain. 22–29 (SPSGAGKS) contributes to the ATP binding site.

This sequence belongs to the guanylate kinase family.

Its subcellular location is the cytoplasm. The enzyme catalyses GMP + ATP = GDP + ADP. Essential for recycling GMP and indirectly, cGMP. The protein is Guanylate kinase of Agrobacterium fabrum (strain C58 / ATCC 33970) (Agrobacterium tumefaciens (strain C58)).